A 426-amino-acid polypeptide reads, in one-letter code: AP-1 complex subunit mu-1 (426 aa).

Residues 167 to 425 enclose the MHD domain; the sequence is KNEVFLDVIE…TQNGTEYSIR (259 aa).

It belongs to the adaptor complexes medium subunit family. As to quaternary structure, adaptor protein complex 1 (AP-1) is a heterotetramer composed of two large adaptins (gamma-type subunit apl4 and beta-type subunit apl2), a medium adaptin (mu-type subunit apm1) and a small adaptin (sigma-type subunit aps1). AP-1 interacts with clathrin. Interacts with sad1.

The protein resides in the cytoplasmic vesicle. It localises to the clathrin-coated vesicle membrane. Its subcellular location is the membrane. The protein localises to the clathrin-coated pit. Functionally, component of the adaptor complexes which link clathrin to receptors in coated vesicles. Clathrin-associated protein complexes are believed to interact with the cytoplasmic tails of membrane proteins, leading to their selection and concentration. This chain is AP-1 complex subunit mu-1 (apm1), found in Schizosaccharomyces pombe (strain 972 / ATCC 24843) (Fission yeast).